Reading from the N-terminus, the 351-residue chain is Cytosolic sulfotransferase 9 (351 aa).

Over residues 1 to 11 the composition is skewed to basic and acidic residues; the sequence is MDEKDILRNLR. Positions 1-24 are disordered; it reads MDEKDILRNLREEEEEEEENQSEE. The span at 12–22 shows a compositional bias: acidic residues; that stretch reads EEEEEEEENQS. 80 to 85 contacts 3'-phosphoadenylyl sulfate; the sequence is KSGTTW. His-152 (proton acceptor) is an active-site residue. Residues Arg-174, Ser-182, Tyr-252, and 317 to 319 contribute to the 3'-phosphoadenylyl sulfate site; that span reads RKG.

This sequence belongs to the sulfotransferase 1 family. In terms of tissue distribution, expressed in roots and leaves.

It is found in the cytoplasm. Sulfotransferase that utilizes 3'-phospho-5'-adenylyl sulfate (PAPS) as sulfonate donor. No activity with brassinosteroids. The polypeptide is Cytosolic sulfotransferase 9 (STO9) (Arabidopsis thaliana (Mouse-ear cress)).